We begin with the raw amino-acid sequence, 1083 residues long: Error-prone DNA polymerase (1083 aa).

The protein belongs to the DNA polymerase type-C family. DnaE2 subfamily.

The protein localises to the cytoplasm. The catalysed reaction is DNA(n) + a 2'-deoxyribonucleoside 5'-triphosphate = DNA(n+1) + diphosphate. Its function is as follows. DNA polymerase involved in damage-induced mutagenesis and translesion synthesis (TLS). It is not the major replicative DNA polymerase. This Xanthomonas oryzae pv. oryzae (strain KACC10331 / KXO85) protein is Error-prone DNA polymerase.